Consider the following 110-residue polypeptide: Large ribosomal subunit protein uL23c (110 aa).

It belongs to the universal ribosomal protein uL23 family. Part of the 50S ribosomal subunit.

It is found in the plastid. The protein localises to the chloroplast. In terms of biological role, binds to 23S rRNA. The protein is Large ribosomal subunit protein uL23c (rpl23) of Porphyra purpurea (Red seaweed).